Here is a 1372-residue protein sequence, read N- to C-terminus: DNA-directed RNA polymerase subunit beta (1372 aa).

Belongs to the RNA polymerase beta chain family. As to quaternary structure, the RNAP catalytic core consists of 2 alpha, 1 beta, 1 beta' and 1 omega subunit. When a sigma factor is associated with the core the holoenzyme is formed, which can initiate transcription.

It carries out the reaction RNA(n) + a ribonucleoside 5'-triphosphate = RNA(n+1) + diphosphate. Functionally, DNA-dependent RNA polymerase catalyzes the transcription of DNA into RNA using the four ribonucleoside triphosphates as substrates. This Rickettsia bellii (strain RML369-C) protein is DNA-directed RNA polymerase subunit beta.